The chain runs to 162 residues: 2-C-methyl-D-erythritol 2,4-cyclodiphosphate synthase (162 aa).

Residues aspartate 12 and histidine 14 each contribute to the a divalent metal cation site. 4-CDP-2-C-methyl-D-erythritol 2-phosphate is bound by residues 12–14 (DVH) and 38–39 (HS). A divalent metal cation is bound at residue histidine 46. Residues 60-62 (DIG), 136-139 (TTTE), phenylalanine 143, and arginine 146 each bind 4-CDP-2-C-methyl-D-erythritol 2-phosphate.

It belongs to the IspF family. Homotrimer. Requires a divalent metal cation as cofactor.

It carries out the reaction 4-CDP-2-C-methyl-D-erythritol 2-phosphate = 2-C-methyl-D-erythritol 2,4-cyclic diphosphate + CMP. It functions in the pathway isoprenoid biosynthesis; isopentenyl diphosphate biosynthesis via DXP pathway; isopentenyl diphosphate from 1-deoxy-D-xylulose 5-phosphate: step 4/6. In terms of biological role, involved in the biosynthesis of isopentenyl diphosphate (IPP) and dimethylallyl diphosphate (DMAPP), two major building blocks of isoprenoid compounds. Catalyzes the conversion of 4-diphosphocytidyl-2-C-methyl-D-erythritol 2-phosphate (CDP-ME2P) to 2-C-methyl-D-erythritol 2,4-cyclodiphosphate (ME-CPP) with a corresponding release of cytidine 5-monophosphate (CMP). This is 2-C-methyl-D-erythritol 2,4-cyclodiphosphate synthase from Porphyromonas gingivalis (strain ATCC BAA-308 / W83).